The primary structure comprises 543 residues: Chaperonin GroEL (543 aa).

ATP-binding positions include 29 to 32, 86 to 90, G413, and D504; these read TVGP and DGTTT.

It belongs to the chaperonin (HSP60) family. Forms a cylinder of 14 subunits composed of two heptameric rings stacked back-to-back. Interacts with the co-chaperonin GroES.

The protein resides in the cytoplasm. It carries out the reaction ATP + H2O + a folded polypeptide = ADP + phosphate + an unfolded polypeptide.. In terms of biological role, together with its co-chaperonin GroES, plays an essential role in assisting protein folding. The GroEL-GroES system forms a nano-cage that allows encapsulation of the non-native substrate proteins and provides a physical environment optimized to promote and accelerate protein folding. This Mycoplasma pneumoniae (strain ATCC 29342 / M129 / Subtype 1) (Mycoplasmoides pneumoniae) protein is Chaperonin GroEL.